The following is a 136-amino-acid chain: Invertebrate-type lysozyme (136 aa).

Residues 1–11 (METVSVEEGLD) form the signal peptide. An I-type lysozyme domain is found at 14–130 (PGMVSQKCLL…WELLQKIPGC (117 aa)). Intrachain disulfides connect Cys-21–Cys-98, Cys-24–Cys-130, Cys-26–Cys-33, Cys-38–Cys-47, Cys-60–Cys-80, Cys-70–Cys-76, and Cys-94–Cys-112. The active-site Proton donor is the Glu-29. The Nucleophile role is filled by Asp-41. 53–59 (KQPYWID) is a binding site for substrate. A glycan (N-linked (GlcNAc...) asparagine) is linked at Asn-75. Substrate-binding positions include Tyr-84, Tyr-92, 105 to 107 (HNG), and Lys-119.

As to quaternary structure, homodimer in its autoinhibited state. Active as monomer.

It is found in the secreted. It carries out the reaction Hydrolysis of (1-&gt;4)-beta-linkages between N-acetylmuramic acid and N-acetyl-D-glucosamine residues in a peptidoglycan and between N-acetyl-D-glucosamine residues in chitodextrins.. Its activity is regulated as follows. Chitinase activity is activated by high salt concentrations which cause the release of the monomer from the autoinhibited homodimer. Functionally, bacteriolytic activity against Gram-positive bacterium M.luteus and thereby probably protects against bacterial infection. Also has chitinase activity. May act as an ispopeptidase, cleaving isopeptide bonds between the side chains of Lys and Gln residues in proteins or in the cross-linking peptide of peptidoglycan in bacterial cell walls. This chain is Invertebrate-type lysozyme, found in Ruditapes philippinarum (Japanese carpet shell).